The primary structure comprises 760 residues: MIVGKVLDMDEKTAIIMTDDFAFLNVVRTSEMAVGKKVKVLDSDIIKPKNSLRRYLPVAAVAACFVIVLSFVLMFINGNTARKNIYAYVGIDINPSIELWINYNNKIAEAKALNGDAETVLEGLELKEKTVAEAVNEIVQKSMELGFISREKENIILISTACDLKAGEGSENKDVQNKIGQLFDDVNKAVSDLKNSGITTRILNLTLEERESSKEENISMGRYAVYLKAKEQNVNLTIDEIKDADLLELIAKVGIDNENVPEDIVTEDKDNLDAINTGPAESAVPEVTETLPATSTPGRTEGNTATGSVDSTPALSKNETPGKTETPGRTFNTPAKSSLGQSSTPKPVSPVQTATATKGIGTLTPRNSPTPVIPSTGIQWIDQANERINEIRKRNVQIKVVDSSNKPIENAYVEAVLTNHAFGFGTAITRRAMYDSNYTKFIKDHFNWAVFENESKWYTNEPSMGIITYDDADYLYEFCRSNGIKVRGHCIFWEAEEWQPAWVRSLDPFTLRFAVDNRLNSAVGHFKGKFEHWDVNNEMIHGNFFKSRLGESIWPYMFNRAREIDPNAKYFVNNNITTLKEADDCVALVNWLRSQGVRVDGVGVHGHFGDSVDRNLLKGILDKLSVLNLPIWITEYDSVTPDEYRRADNLENLYRTAFSHPSVEGIVMWGFWERVHWRGRDASIVNDNWTLNEAGRRFESLMNEWTTRAYGSTDGSGSFGFRGFYGTYRITVTVPGKGKYNYTLNLNRGSGTLQTTYRIP.

The Cytoplasmic portion of the chain corresponds to 1 to 55 (MIVGKVLDMDEKTAIIMTDDFAFLNVVRTSEMAVGKKVKVLDSDIIKPKNSLRRY). The RsgI N-terminal anti-sigma domain maps to 2-49 (IVGKVLDMDEKTAIIMTDDFAFLNVVRTSEMAVGKKVKVLDSDIIKPK). The helical transmembrane segment at 56 to 76 (LPVAAVAACFVIVLSFVLMFI) threads the bilayer. The Extracellular segment spans residues 77–760 (NGNTARKNIY…GTLQTTYRIP (684 aa)). The segment at 274–352 (AINTGPAESA…STPKPVSPVQ (79 aa)) is disordered. Residues 291-352 (LPATSTPGRT…STPKPVSPVQ (62 aa)) show a composition bias toward polar residues. Positions 402 to 701 (DSSNKPIENA…NEAGRRFESL (300 aa)) constitute a GH10 domain. Glu538 serves as the catalytic Proton donor. Glu635 functions as the Nucleophile in the catalytic mechanism.

In the C-terminal section; belongs to the glycosyl hydrolase 10 (cellulase F) family. Interacts (via RsgI N-terminal anti-sigma domain) with SigI6.

Its subcellular location is the cell membrane. It catalyses the reaction Endohydrolysis of (1-&gt;4)-beta-D-xylosidic linkages in xylans.. The protein operates within glycan degradation; xylan degradation. In terms of biological role, anti-sigma factor for SigI6. Negatively regulates SigI6 activity through direct interaction. Binding of the polysaccharide substrate to the extracellular C-terminal sensing domain of RsgI6 may induce a conformational change in its N-terminal cytoplasmic region, leading to the release and activation of SigI6. Binds to and hydrolyzes insoluble and soluble xylan substrates. Has low enzymatic activity. The polypeptide is Anti-sigma-I factor RsgI6 (Acetivibrio thermocellus (strain ATCC 27405 / DSM 1237 / JCM 9322 / NBRC 103400 / NCIMB 10682 / NRRL B-4536 / VPI 7372) (Clostridium thermocellum)).